A 468-amino-acid chain; its full sequence is Argininosuccinate lyase (468 aa).

It belongs to the lyase 1 family. Argininosuccinate lyase subfamily.

Its subcellular location is the cytoplasm. It catalyses the reaction 2-(N(omega)-L-arginino)succinate = fumarate + L-arginine. The protein operates within amino-acid biosynthesis; L-arginine biosynthesis; L-arginine from L-ornithine and carbamoyl phosphate: step 3/3. This chain is Argininosuccinate lyase, found in Paraburkholderia phytofirmans (strain DSM 17436 / LMG 22146 / PsJN) (Burkholderia phytofirmans).